A 431-amino-acid chain; its full sequence is Histidinol dehydrogenase (431 aa).

NAD(+) contacts are provided by Tyr-127, Gln-189, and Asn-212. Substrate contacts are provided by Ser-237, Gln-259, and His-262. Residues Gln-259 and His-262 each coordinate Zn(2+). Active-site proton acceptor residues include Glu-326 and His-327. Substrate contacts are provided by His-327, Asp-360, Glu-414, and His-419. Asp-360 contributes to the Zn(2+) binding site. His-419 lines the Zn(2+) pocket.

It belongs to the histidinol dehydrogenase family. It depends on Zn(2+) as a cofactor.

It catalyses the reaction L-histidinol + 2 NAD(+) + H2O = L-histidine + 2 NADH + 3 H(+). Its pathway is amino-acid biosynthesis; L-histidine biosynthesis; L-histidine from 5-phospho-alpha-D-ribose 1-diphosphate: step 9/9. In terms of biological role, catalyzes the sequential NAD-dependent oxidations of L-histidinol to L-histidinaldehyde and then to L-histidine. In Xanthomonas campestris pv. campestris (strain ATCC 33913 / DSM 3586 / NCPPB 528 / LMG 568 / P 25), this protein is Histidinol dehydrogenase.